The following is a 467-amino-acid chain: Retinoic acid receptor RXR-alpha (467 aa).

The disordered stretch occupies residues 1 to 61 (MDTKHFLPLD…LHSPISTLSS (61 aa)). The tract at residues 1 to 139 (MDTKHFLPLD…GNMSSFTKHI (139 aa)) is modulating. A Glycyl lysine isopeptide (Lys-Gly) (interchain with G-Cter in SUMO2) cross-link involves residue lysine 4. A phosphoserine mark is found at serine 22 and serine 28. The span at 32–55 (PSLHPSLGPGLGSPLGSPGQLHSP) shows a compositional bias: low complexity. Phosphoserine; by MAPK8 and MAPK9 occurs at positions 61 and 75. Positions 79–109 (PHSMSVPTTPTLGFETGSPQLNSPMNPVSSS) are disordered. Positions 83-109 (SVPTTPTLGFETGSPQLNSPMNPVSSS) are enriched in polar residues. At threonine 87 the chain carries Phosphothreonine; by MAPK8 and MAPK9. Lysine 113 is covalently cross-linked (Glycyl lysine isopeptide (Lys-Gly) (interchain with G-Cter in SUMO)). Serine 134 is subject to Phosphoserine. Zn(2+)-binding residues include cysteine 140 and cysteine 143. The segment at 140 to 160 (CAICGDRSSGKHYGVYSCEGC) adopts an NR C4-type zinc-finger fold. Residues 140–205 (CAICGDRSSG…RYQKCLAMGM (66 aa)) constitute a DNA-binding region (nuclear receptor). N6-acetyllysine is present on lysine 150. Zn(2+) contacts are provided by cysteine 157 and cysteine 160. A nuclear localization signal region spans residues 165–170 (KRTVRK). Zn(2+) is bound by residues cysteine 176, cysteine 182, cysteine 192, and cysteine 195. Residues 176–200 (CRDNKDCLIDKRQRNRCQYCRYQKC) form an NR C4-type zinc finger. Positions 206–229 (KREAVQEERQRGKDRNENEVESTS) are hinge. A compositionally biased stretch (basic and acidic residues) spans 211–223 (QEERQRGKDRNEN). A disordered region spans residues 211–233 (QEERQRGKDRNENEVESTSSANE). An NR LBD domain is found at 232-463 (NEDMPVEKIL…TFLMEMLEAP (232 aa)). A Phosphoserine modification is found at serine 264. Serine 265 carries the post-translational modification Phosphoserine; by MAPK8 and MAPK9. 9-cis-retinoate contacts are provided by arginine 321 and alanine 332. Residues arginine 321 and alanine 332 each coordinate all-trans-retinoate. The segment at 353–373 (RVLTELVSKMRDMQMDKTELG) is required for nuclear export.

It belongs to the nuclear hormone receptor family. NR2 subfamily. In terms of assembly, homodimer. Heterodimer (via C-terminus) with RARA; required for ligand-dependent retinoic acid receptor transcriptional activity; association with RARA is enhanced by pulsatile shear stress. Heterodimer with PPARA (via the leucine-like zipper in the LBD); the interaction is required for PPARA transcriptional activity. Heterodimerizes with PPARG. Heterodimerizes (via NR LBD) with RARB. Heterodimerizes with NR1H4; the heterodimerization enhances the binding affinity for LXXLL motifs from coactivators. Interacts with NCOA3 and NCOA6 coactivators. Interacts with FAM120B. Interacts with coactivator PELP1, SENP6, SFPQ, DNTTIP2 and RNF8. Interacts with PRMT2. Interacts with ASXL1. Interacts with BHLHE40/DEC1, BHLHE41/DEC2, MED1, NCOR1 and NCOR2. Interacts in a ligand-dependent fashion with MED1 and NCOA1. Interacts with VDR. Interacts with EP300; the interaction is decreased by 9-cis retinoic acid. Heterodimer (via C-terminus) with NR4A1 (DNA-binding domain); the interaction is enhanced by 9-cis retinoic acid. NR4A1 competes with EP300 for interaction with RXRA and thereby attenuates EP300 mediated acetylation of RXRA. In the absence of hormonal ligand, interacts with TACC1. Interacts ith IGFBP3. In terms of processing, phosphorylated on serine and threonine residues mainly in the N-terminal modulating domain. Constitutively phosphorylated on Ser-22 in the presence or absence of ligand. Under stress conditions, hyperphosphorylated by activated JNK on Ser-61, Ser-75, Thr-87 and Ser-265. Phosphorylated on Ser-28, in vitro, by PKA. This phosphorylation is required for repression of cAMP-mediated transcriptional activity of RARA. Ubiquitinated by UBR5, leading to its degradation: UBR5 specifically recognizes and binds ligand-bound RXRA when it is not associated with coactivators (NCOAs). In presence of NCOAs, the UBR5-degron is not accessible, preventing its ubiquitination and degradation. Post-translationally, sumoylation negatively regulates transcriptional activity. Desumoylated specifically by SENP6. In terms of processing, acetylated by EP300; acetylation enhances DNA binding and transcriptional activity. As to expression, expressed in the adrenal gland with main expression in the zona fasciculata and medulla (at protein level). Expressed in aortic endothelial cells, with high expression in the descending thoracic aorta and the outer curvature of the aortic arch, where pulsatory shear stress exists, but very low in the inner curvature of the aortic arch, where oscillatory shear stress prevails (at protein level).

The protein resides in the nucleus. It is found in the cytoplasm. It localises to the mitochondrion. Functionally, receptor for retinoic acid that acts as a transcription factor. Forms homo- or heterodimers with retinoic acid receptors (RARs) and binds to target response elements in response to their ligands, all-trans or 9-cis retinoic acid, to regulate gene expression in various biological processes. The RAR/RXR heterodimers bind to the retinoic acid response elements (RARE) composed of tandem 5'-AGGTCA-3' sites known as DR1-DR5 to regulate transcription. The high affinity ligand for retinoid X receptors (RXRs) is 9-cis retinoic acid. In the absence of ligand, the RXR-RAR heterodimers associate with a multiprotein complex containing transcription corepressors that induce histone deacetylation, chromatin condensation and transcriptional suppression. On ligand binding, the corepressors dissociate from the receptors and coactivators are recruited leading to transcriptional activation. Serves as a common heterodimeric partner for a number of nuclear receptors, such as RARA, RARB and PPARA. The RXRA/RARB heterodimer can act as a transcriptional repressor or transcriptional activator, depending on the RARE DNA element context. The RXRA/PPARA heterodimer is required for PPARA transcriptional activity on fatty acid oxidation genes such as ACOX1 and the P450 system genes. Together with RARA, positively regulates microRNA-10a expression, thereby inhibiting the GATA6/VCAM1 signaling response to pulsatile shear stress in vascular endothelial cells. Acts as an enhancer of RARA binding to RARE DNA element. May facilitate the nuclear import of heterodimerization partners such as VDR and NR4A1. Promotes myelin debris phagocytosis and remyelination by macrophages. Plays a role in the attenuation of the innate immune system in response to viral infections, possibly by negatively regulating the transcription of antiviral genes such as type I IFN genes. Involved in the regulation of calcium signaling by repressing ITPR2 gene expression, thereby controlling cellular senescence. The protein is Retinoic acid receptor RXR-alpha (Rxra) of Rattus norvegicus (Rat).